A 716-amino-acid chain; its full sequence is DNA replication licensing factor MCM7 (716 aa).

The segment at 178 to 205 adopts a C4-type zinc-finger fold; sequence CEDCGHEIYQEVTSRVFMPLFKCPSSRC. In terms of domain architecture, MCM spans 326-531; sequence IYNKLSRSLA…MDSDLELAKH (206 aa). 376–383 serves as a coordination point for ATP; the sequence is GDPGVAKS. Residues 508-511 carry the Arginine finger motif; the sequence is SRFD.

It belongs to the MCM family. Component of the minichromosome maintenance (MCM) complex, a heterotetramer composed of MCM2, MCM3, MCM4, MCM5, MCM6 and MCM7. Interacts with ETG1. As to expression, expressed in shoot apex and flower buds.

The protein localises to the nucleus. The protein resides in the cytoplasm. The enzyme catalyses ATP + H2O = ADP + phosphate + H(+). Functionally, probable component of the MCM2-7 complex (MCM complex) that may function as a DNA helicase and which is essential to undergo a single round of replication initiation and elongation per cell cycle in eukaryotic cells. Required for megagametophyte and embryo development. The polypeptide is DNA replication licensing factor MCM7 (MCM7) (Arabidopsis thaliana (Mouse-ear cress)).